The sequence spans 875 residues: Probable serine/threonine-protein kinase samkC (875 aa).

A compositionally biased stretch (polar residues) spans 1-12 (METTTITSILDD). A disordered region spans residues 1–47 (METTTITSILDDNNNNNNNNNNNNNNNNNNNNNNNNNNNNNNNNNYN). Low complexity predominate over residues 13 to 45 (NNNNNNNNNNNNNNNNNNNNNNNNNNNNNNNNN). In terms of domain architecture, SAM spans 51–116 (WDNEMVCKWL…SEFDDLKNIF (66 aa)). A coiled-coil region spans residues 135–162 (DNNNLNNLNNNNNNNNNNNNNNNNNNNN). The span at 136–168 (NNNLNNLNNNNNNNNNNNNNNNNNNNNNNNNNN) shows a compositional bias: low complexity. Residues 136–170 (NNNLNNLNNNNNNNNNNNNNNNNNNNNNNNNNNKT) form a disordered region. A Protein kinase domain is found at 181–452 (YVFIKQMKGS…SKQLLNFSWF (272 aa)). Residues 187 to 195 (MKGSVNCSL) and Lys-210 each bind ATP. The active-site Proton acceptor is the Asp-301. Disordered stretches follow at residues 331–362 (NNNDDDNYDNHNHNHNHNHNHNHDNDNDNDTN) and 461–718 (SEPQ…NNNN). A compositionally biased stretch (low complexity) spans 474–554 (PQTSQSKPKP…KPKPSSSLSS (81 aa)). Over residues 555–564 (EPPPLEPQPK) the composition is skewed to pro residues. 3 stretches are compositionally biased toward low complexity: residues 565-581 (PQTSQSKPKPSSSLSSS), 589-611 (QPTQSSKPQPSQSKPQPIQSQPT), and 617-653 (QPKSSKQQPQSKQQQQQQQQQQQQQQQQQQQQQQQQK). Residues 626 to 655 (QSKQQQQQQQQQQQQQQQQQQQQQQQQKSK) adopt a coiled-coil conformation. Positions 654-663 (SKPEQSKSKP) are enriched in basic and acidic residues. Residues 664–718 (EQSQSKPQPGQPLQSPSKPQPIPSTTKTTTTTTTTTTPNNNNNNNNNNNNNNNNN) are compositionally biased toward low complexity. The helical transmembrane segment at 842 to 862 (TLILYTFYYFLSNTLIYQIIL) threads the bilayer.

The protein belongs to the protein kinase superfamily. Ser/Thr protein kinase family.

It is found in the membrane. It carries out the reaction L-seryl-[protein] + ATP = O-phospho-L-seryl-[protein] + ADP + H(+). The catalysed reaction is L-threonyl-[protein] + ATP = O-phospho-L-threonyl-[protein] + ADP + H(+). The chain is Probable serine/threonine-protein kinase samkC (samkC) from Dictyostelium discoideum (Social amoeba).